The following is a 249-amino-acid chain: 5'-nucleotidase SurE (249 aa).

A divalent metal cation is bound by residues D8, D9, S39, and N91.

The protein belongs to the SurE nucleotidase family. Requires a divalent metal cation as cofactor.

It is found in the cytoplasm. The enzyme catalyses a ribonucleoside 5'-phosphate + H2O = a ribonucleoside + phosphate. Functionally, nucleotidase that shows phosphatase activity on nucleoside 5'-monophosphates. This Haemophilus influenzae (strain PittGG) protein is 5'-nucleotidase SurE.